The sequence spans 253 residues: Ubiquinone/menaquinone biosynthesis C-methyltransferase UbiE (253 aa).

S-adenosyl-L-methionine contacts are provided by residues Thr-76, Asp-97, and 125–126; that span reads NA.

This sequence belongs to the class I-like SAM-binding methyltransferase superfamily. MenG/UbiE family.

It catalyses the reaction a 2-demethylmenaquinol + S-adenosyl-L-methionine = a menaquinol + S-adenosyl-L-homocysteine + H(+). The catalysed reaction is a 2-methoxy-6-(all-trans-polyprenyl)benzene-1,4-diol + S-adenosyl-L-methionine = a 5-methoxy-2-methyl-3-(all-trans-polyprenyl)benzene-1,4-diol + S-adenosyl-L-homocysteine + H(+). Its pathway is quinol/quinone metabolism; menaquinone biosynthesis; menaquinol from 1,4-dihydroxy-2-naphthoate: step 2/2. It participates in cofactor biosynthesis; ubiquinone biosynthesis. Its function is as follows. Methyltransferase required for the conversion of demethylmenaquinol (DMKH2) to menaquinol (MKH2) and the conversion of 2-polyprenyl-6-methoxy-1,4-benzoquinol (DDMQH2) to 2-polyprenyl-3-methyl-6-methoxy-1,4-benzoquinol (DMQH2). The polypeptide is Ubiquinone/menaquinone biosynthesis C-methyltransferase UbiE (Stenotrophomonas maltophilia (strain R551-3)).